The following is a 255-amino-acid chain: Imidazole glycerol phosphate synthase subunit HisF (255 aa).

Active-site residues include D12 and D131.

This sequence belongs to the HisA/HisF family. In terms of assembly, heterodimer of HisH and HisF.

The protein resides in the cytoplasm. The enzyme catalyses 5-[(5-phospho-1-deoxy-D-ribulos-1-ylimino)methylamino]-1-(5-phospho-beta-D-ribosyl)imidazole-4-carboxamide + L-glutamine = D-erythro-1-(imidazol-4-yl)glycerol 3-phosphate + 5-amino-1-(5-phospho-beta-D-ribosyl)imidazole-4-carboxamide + L-glutamate + H(+). The protein operates within amino-acid biosynthesis; L-histidine biosynthesis; L-histidine from 5-phospho-alpha-D-ribose 1-diphosphate: step 5/9. IGPS catalyzes the conversion of PRFAR and glutamine to IGP, AICAR and glutamate. The HisF subunit catalyzes the cyclization activity that produces IGP and AICAR from PRFAR using the ammonia provided by the HisH subunit. This chain is Imidazole glycerol phosphate synthase subunit HisF, found in Ignicoccus hospitalis (strain KIN4/I / DSM 18386 / JCM 14125).